The sequence spans 545 residues: Indole-3-pyruvate decarboxylase (545 aa).

Thiamine diphosphate is bound at residue glutamate 48. Residues 382–460 (DCLFTAMDMI…VILFNNASWE (79 aa)) are thiamine pyrophosphate binding. Mg(2+) is bound by residues aspartate 429 and asparagine 456.

Belongs to the TPP enzyme family. A metal cation serves as cofactor. Requires thiamine diphosphate as cofactor.

The enzyme catalyses indole-3-pyruvate + H(+) = indole-3-acetaldehyde + CO2. Its pathway is plant hormone metabolism; auxin biosynthesis. This is Indole-3-pyruvate decarboxylase (ipdC) from Azospirillum brasilense.